The chain runs to 468 residues: Cyclin-dependent kinase 14 (468 aa).

Phosphoserine occurs at positions 24, 77, and 94. The tract at residues 102–131 (FKSSSAGKESPKVRRHSSPSSPTSPKFGKA) is disordered. Phosphoserine is present on S133. The Protein kinase domain occupies 134–418 (YEKLEKLGEG…AQAALSHEYF (285 aa)). Residues 140 to 148 (LGEGSYATV) and K163 contribute to the ATP site. The active-site Proton acceptor is D255. The segment at 448-468 (ESMRAFGKNSSYGKSLSNSKH) is disordered. Polar residues predominate over residues 455-468 (KNSSYGKSLSNSKH).

It belongs to the protein kinase superfamily. CMGC Ser/Thr protein kinase family. CDC2/CDKX subfamily. As to quaternary structure, found in a complex with LRP6, CCNY and CAPRIN2 during G2/M stage; CAPRIN2 functions as a scaffold for the complex by binding to CCNY via its N terminus and to CDK14 via its C terminus. Interacts with CCNY; CCNY mediates its recruitment to the plasma membrane and promotes phosphorylation of LRP6. Interacts with CCDN3 and CDKN1A. Interacts with SEPT8. Interacts with 14-3-3 proteina YWHAB, YWHAE, YWHAH and YWHAQ.

The protein localises to the cell membrane. The protein resides in the cytoplasm. It is found in the nucleus. The enzyme catalyses L-seryl-[protein] + ATP = O-phospho-L-seryl-[protein] + ADP + H(+). It carries out the reaction L-threonyl-[protein] + ATP = O-phospho-L-threonyl-[protein] + ADP + H(+). With respect to regulation, serine/threonine-protein kinase activity is promoted by associated cyclins CCDN3 and CCNY and repressed by CDKN1A. Serine/threonine-protein kinase involved in the control of the eukaryotic cell cycle, whose activity is controlled by an associated cyclin. Acts as a cell-cycle regulator of Wnt signaling pathway during G2/M phase by mediating the phosphorylation of LRP6 at 'Ser-1490', leading to the activation of the Wnt signaling pathway. Acts as a regulator of cell cycle progression and cell proliferation via its interaction with CCDN3. Phosphorylates RB1 in vitro, however the relevance of such result remains to be confirmed in vivo. May also play a role in meiosis, neuron differentiation and may indirectly act as a negative regulator of insulin-responsive glucose transport. This is Cyclin-dependent kinase 14 (CDK14) from Oryctolagus cuniculus (Rabbit).